The primary structure comprises 160 residues: Phosphopantetheine adenylyltransferase (160 aa).

Residue Thr10 coordinates substrate. Residues 10–11 (TF) and His18 each bind ATP. 3 residues coordinate substrate: Lys42, Leu74, and Arg88. Residues 89–91 (GLR), Glu99, and 124–130 (HGFLSST) each bind ATP.

It belongs to the bacterial CoaD family. As to quaternary structure, homohexamer. Requires Mg(2+) as cofactor.

The protein resides in the cytoplasm. It carries out the reaction (R)-4'-phosphopantetheine + ATP + H(+) = 3'-dephospho-CoA + diphosphate. The protein operates within cofactor biosynthesis; coenzyme A biosynthesis; CoA from (R)-pantothenate: step 4/5. Its function is as follows. Reversibly transfers an adenylyl group from ATP to 4'-phosphopantetheine, yielding dephospho-CoA (dPCoA) and pyrophosphate. The sequence is that of Phosphopantetheine adenylyltransferase from Aliivibrio fischeri (strain MJ11) (Vibrio fischeri).